The sequence spans 188 residues: Protein Cripto (188 aa).

Positions 1-30 (MDCRKMARFSYSVIWIMAISKVFELGLVAG) are cleaved as a signal peptide. An EGF-like domain is found at 78–107 (LNRTCCLNGGTCMLGSFCACPPSFYGRNCE). The N-linked (GlcNAc...) asparagine glycan is linked to asparagine 79. Cystine bridges form between cysteine 82–cysteine 89, cysteine 83–cysteine 95, cysteine 97–cysteine 106, cysteine 115–cysteine 133, cysteine 128–cysteine 149, and cysteine 131–cysteine 140. Residue aspartate 150 is the site of GPI-anchor amidated aspartate attachment. The propeptide at 151-188 (GLVMDEHLVASRTPELPPSARTTTFMLVGICLSIQSYY) is removed in mature form.

This sequence belongs to the EGF-CFC (Cripto-1/FRL1/Cryptic) family. As to quaternary structure, interacts with the activin type-1 receptor ACVR1B. The GPI-anchor is attached to the protein in the endoplasmic reticulum and serves to target the protein to the cell surface. There, it is processed by GPI processing phospholipase A2 (TMEM8A), removing an acyl-chain at the sn-2 position of GPI and releasing CRIPTO as a lysophosphatidylinositol-bearing form, which is further cleaved by phospholipase D (GPLD1) into a soluble form. In terms of tissue distribution, preferentially expressed in gastric and colorectal carcinomas than in their normal counterparts. Expressed in breast and lung.

Its subcellular location is the cell membrane. It localises to the secreted. Functionally, GPI-anchored cell membrane protein involved in Nodal signaling. Cell-associated CRIPTO acts as a Nodal coreceptor in cis. Shedding of CRIPTO by TMEM8A modulates Nodal signaling by allowing soluble CRIPTO to act as a Nodal coreceptor on other cells. Could play a role in the determination of the epiblastic cells that subsequently give rise to the mesoderm. In Homo sapiens (Human), this protein is Protein Cripto.